Reading from the N-terminus, the 308-residue chain is CASP-like protein 4A2 (308 aa).

Residues 1–135 are disordered; that stretch reads MALEAQPSPS…APAPAPRVPA (135 aa). The Cytoplasmic segment spans residues 1–161; sequence MALEAQPSPS…KRPTAVLQRT (161 aa). Positions 22–31 are enriched in gly residues; sequence GGAGAPGGSA. Positions 32–44 are enriched in low complexity; it reads GDADAQARRATSG. Pro residues-rich tracts occupy residues 54 to 65 and 89 to 132; these read RRSPPPPFPRTP and FQPP…PAPR. A helical membrane pass occupies residues 162–182; sequence ALVARVAAALLCLAALAVLAA. Topologically, residues 183-203 are extracellular; the sequence is DSRKGFALDSYSNYSQLRYSE. The N-linked (GlcNAc...) asparagine glycan is linked to asparagine 195. A helical transmembrane segment spans residues 204–224; that stretch reads AVNVIGFVYSVLQFFVLADLM. Over 225 to 240 the chain is Cytoplasmic; the sequence is RRNKHLNPRRKGDYFD. A helical membrane pass occupies residues 241 to 262; that stretch reads FFMDQVLAYLLISSSSSATARV. Topologically, residues 263–280 are extracellular; it reads GDWIDNWGSDPFPKMANS. Asparagine 279 is a glycosylation site (N-linked (GlcNAc...) asparagine). The helical transmembrane segment at 281–301 threads the bilayer; that stretch reads SIAISFMAFLVFAISALISAY. Over 302–308 the chain is Cytoplasmic; sequence NLFRRDI.

Belongs to the Casparian strip membrane proteins (CASP) family. Homodimer and heterodimers.

It is found in the cell membrane. The protein is CASP-like protein 4A2 of Oryza sativa subsp. japonica (Rice).